A 1908-amino-acid chain; its full sequence is Putative ankyrin repeat protein L484 (1908 aa).

ANK repeat units lie at residues 20-50 (DIMEQFFLTIKTGDIDKIRNFVAQNKNKFNI), 60-97 (PNKTPIHAVLELDDRIADQETKLTIIKYLDKMGAPMDL), 101-130 (DNVWPIHLAAADQDEDIIDYMLKNKVSIDR), 134-167 (SNNTPLHYAVYGKQVPCFDKVKVGSIVPPQDIDK), and 1370-1399 (DGNTPLHLAISMTNPDIVEILLKHGANPFT). A coiled-coil region spans residues 1539–1603 (VQLLNPKLRD…QTNISDLEFK (65 aa)).

It is found in the virion. This is Putative ankyrin repeat protein L484 from Acanthamoeba polyphaga mimivirus (APMV).